A 1152-amino-acid polypeptide reads, in one-letter code: P3N-PIPO polyprotein (1152 aa).

Residues 292 to 437 form the Peptidase S30 domain; it reads VMNQQTLMAF…HSITHRMVQY (146 aa). Residues histidine 345, aspartate 354, and serine 388 each act as for P1 proteinase activity in the active site. Positions 489 to 492 match the Involved in interaction with stylet and aphid transmission motif; the sequence is KITC. The Involved in virions binding and aphid transmission signature appears at 747–749; it reads PTK. Residues 773 to 895 form the Peptidase C6 domain; sequence MFVTKDGYCY…ESEMQHYRVG (123 aa). Residues cysteine 781 and histidine 854 each act as for helper component proteinase activity in the active site.

This sequence belongs to the potyviridae P3N-PIPO polyprotein family. Interacts (via PIPO domain) with host PCaP1 protein; this interaction may help to anchor the movement complex to the plasma membrane from which the complex could move to the plasmodesmata. In terms of processing, potyviral RNA is expressed as two polyproteins which undergo post-translational proteolytic processing. Genome polyprotein is processed by NIa-pro, P1 and HC-pro proteinases resulting in the production of at least ten individual proteins. P3N-PIPO is cleaved by P1 and HC-pro proteinases resulting in the production of three individual proteins. The P1 proteinase and the HC-pro cleave only their respective C-termini autocatalytically.

The protein resides in the host cell junction. Its subcellular location is the host plasmodesma. The enzyme catalyses Hydrolyzes a Gly-|-Gly bond at its own C-terminus, commonly in the sequence -Tyr-Xaa-Val-Gly-|-Gly, in the processing of the potyviral polyprotein.. Functionally, required for aphid transmission and also has proteolytic activity. Only cleaves a Gly-Gly dipeptide at its own C-terminus. Interacts with virions and aphid stylets. Acts as a suppressor of RNA-mediated gene silencing, also known as post-transcriptional gene silencing (PTGS), a mechanism of plant viral defense that limits the accumulation of viral RNAs. May have RNA-binding activity. In terms of biological role, allows efficient cell to cell propagation, by bypassing the host cell wall barrier. Transports viral genome to neighboring plant cells directly through plasmosdesmata, without any budding. The polypeptide is P3N-PIPO polyprotein (Lettuce mosaic virus (strain 0 / isolate French) (LMV)).